Here is a 638-residue protein sequence, read N- to C-terminus: Mediator of RNA polymerase II transcription subunit 17 (638 aa).

The disordered stretch occupies residues 1 to 21; the sequence is MSDSFNLPLRPLTEKRERPDP.

The protein belongs to the Mediator complex subunit 17 family. Component of the Mediator complex.

It is found in the nucleus. In terms of biological role, component of the Mediator complex, a coactivator involved in the regulated transcription of nearly all RNA polymerase II-dependent genes. Mediator functions as a bridge to convey information from gene-specific regulatory proteins to the basal RNA polymerase II transcription machinery. Mediator is recruited to promoters by direct interactions with regulatory proteins and serves as a scaffold for the assembly of a functional preinitiation complex with RNA polymerase II and the general transcription factors. This chain is Mediator of RNA polymerase II transcription subunit 17 (srb4), found in Aspergillus oryzae (strain ATCC 42149 / RIB 40) (Yellow koji mold).